The following is a 506-amino-acid chain: Lysine--tRNA ligase (506 aa).

2 residues coordinate Mg(2+): E416 and E423.

The protein belongs to the class-II aminoacyl-tRNA synthetase family. As to quaternary structure, homodimer. The cofactor is Mg(2+).

It is found in the cytoplasm. It catalyses the reaction tRNA(Lys) + L-lysine + ATP = L-lysyl-tRNA(Lys) + AMP + diphosphate. The chain is Lysine--tRNA ligase from Baumannia cicadellinicola subsp. Homalodisca coagulata.